The primary structure comprises 551 residues: Transcription factor p65 (551 aa).

Met1 is subject to N-acetylmethionine. The 288-residue stretch at 19-306 (PYVEIIEQPK…RIEEKRKRTY (288 aa)) folds into the RHD domain. Lys37 participates in a covalent cross-link: Glycyl lysine isopeptide (Lys-Gly) (interchain with G-Cter in SUMO3). Cys38 is subject to Cysteine persulfide; alternate. Cys38 carries the S-nitrosocysteine; alternate modification. Ser75 is modified ((Microbial infection) Phosphoserine). N6-acetyllysine; by PCAF and EP300; alternate is present on residues Lys122 and Lys123. Residues Lys122 and Lys123 each participate in a glycyl lysine isopeptide (Lys-Gly) (interchain with G-Cter in SUMO3); alternate cross-link. 2 positions are modified to N6-acetyllysine: Lys218 and Lys221. Thr254 is subject to Phosphothreonine. A Phosphoserine; by RPS6KA4 and RPS6KA5 modification is found at Ser276. Phosphoserine is present on Ser281. Positions 301–304 (KRKR) match the Nuclear localization signal motif. Residues 309 to 348 (FKSIMKKSPFSGPTDPRPPPRRIAVPSRSSASVPKPAPQP) form a disordered region. Lys310 carries the post-translational modification N6-acetyllysine; alternate. An N6-methyllysine; by SETD6; alternate modification is found at Lys310. A Phosphoserine; by PKC/PRKCZ modification is found at Ser311. 2 transcriptional activation domain regions span residues 342–389 (PKPA…VLPQ) and 415–476 (PGPP…EFQQ). Thr435 is subject to Phosphothreonine. Phosphoserine; by IKKB and IKKE is present on Ser468. Thr505 is subject to Phosphothreonine; by CHEK1. The disordered stretch occupies residues 506-530 (GAQRPPDPAPAPLGAPGLPNGLLSG). The span at 519–528 (GAPGLPNGLL) shows a compositional bias: low complexity. Residues 520–551 (APGLPNGLLSGDEDFSSIADMDFSALLSQISS) are transcriptional activation domain 2. Ser529 carries the phosphoserine; by CK2 modification. The residue at position 536 (Ser536) is a Phosphoserine; by IKKB. The 9aaTAD motif lies at 536–544 (SIADMDFSA).

As to quaternary structure, component of the NF-kappa-B p65-p50 complex. Component of the NF-kappa-B p65-c-Rel complex. Homodimer; component of the NF-kappa-B p65-p65 complex. Component of the NF-kappa-B p65-p52 complex. May interact with ETHE1. Binds TLE5 and TLE1. Interacts with TP53BP2. Binds to and is phosphorylated by the activated form of either RPS6KA4 or RPS6KA5. Interacts with ING4 and this interaction may be indirect. Interacts with CARM1, USP48 and UNC5CL. Interacts with IRAK1BP1. Interacts with NFKBID. Interacts with NFKBIA. Interacts with GSK3B. Interacts with NFKBIB. Interacts with NFKBIE. Interacts with NFKBIZ. Interacts with EHMT1 (via ANK repeats). Part of a 70-90 kDa complex at least consisting of CHUK, IKBKB, NFKBIA, RELA, ELP1 and MAP3K14. Interacts with HDAC3; HDAC3 mediates the deacetylation of RELA. Interacts with HDAC1; the interaction requires non-phosphorylated RELA. Interacts with CBP; the interaction requires phosphorylated RELA. Interacts (phosphorylated at 'Thr-254') with PIN1; the interaction inhibits p65 binding to NFKBIA. Interacts with SOCS1. Interacts with UXT. Interacts with MTDH and PHF11. Interacts with ARRB2. Interacts with NFKBIA (when phosphorylated), the interaction is direct; phosphorylated NFKBIA is part of a SCF(BTRC)-like complex lacking CUL1. Interacts with RNF25. Interacts (via C-terminus) with DDX1. Interacts with UFL1 and COMMD1. Interacts with BRMS1; this promotes deacetylation of 'Lys-310'. Interacts with NOTCH2. Directly interacts with MEN1; this interaction represses NFKB-mediated transactivation. Interacts with AKIP1, which promotes the phosphorylation and nuclear retention of RELA. Interacts (via the RHD) with GFI1; the interaction, after bacterial lipopolysaccharide (LPS) stimulation, inhibits the transcriptional activity by interfering with the DNA-binding activity to target gene promoter DNA. Interacts (when acetylated at Lys-310) with BRD4; leading to activation of the NF-kappa-B pathway. Interacts with MEFV. Interacts with CLOCK. Interacts (via N-terminus) with CPEN1; this interaction induces proteolytic cleavage of p65/RELA subunit and inhibition of NF-kappa-B transcriptional activity. Interacts with FOXP3. Interacts with CDK5RAP3; stimulates the interaction of RELA with HDAC1, HDAC2 and HDAC3 thereby inhibiting NF-kappa-B transcriptional activity. Interacts with DHX9; this interaction is direct and activates NF-kappa-B-mediated transcription. Interacts with LRRC25. Interacts with TBX21. Interacts with KAT2A. Interacts with ZBTB7A; involved in the control by RELA of the accessibility of target gene promoters. Directly interacts with DDX3X; this interaction may trap RELA in the cytoplasm, impairing nuclear relocalization upon TNF activating signals. Interacts with PHF2. Interacts with MKRN2; the interaction leads to its polyubiquitination and proteasome-dependent degradation. Interacts with ECSIT. Interacts with RAB28; the interaction contributes to RELA transport from cytoplasm to nucleus. (Microbial infection) Interacts with human respiratory syncytial virus (HRSV) protein M2-1. In terms of assembly, (Microbial infection) Interacts with molluscum contagiosum virus MC132. As to quaternary structure, (Microbial infection) Interacts with herpes virus 8 virus protein LANA1. (Microbial infection) Interacts with human cytomegalovirus protein UL44; this interaction prevents NF-kappa-B binding to its promoters. Ubiquitinated by RNF182, leading to its proteasomal degradation. Degradation is required for termination of NF-kappa-B response. Polyubiquitinated via 'Lys-29'-linked ubiquitin; leading to lysosomal degradation. Post-translationally, monomethylated at Lys-310 by SETD6. Monomethylation at Lys-310 is recognized by the ANK repeats of EHMT1 and promotes the formation of repressed chromatin at target genes, leading to down-regulation of NF-kappa-B transcription factor activity. Phosphorylation at Ser-311 disrupts the interaction with EHMT1 without preventing monomethylation at Lys-310 and relieves the repression of target genes. In terms of processing, phosphorylation at Ser-311 disrupts the interaction with EHMT1 and promotes transcription factor activity. Phosphorylation on Ser-536 stimulates acetylation on Lys-310 and interaction with CBP; the phosphorylated and acetylated forms show enhanced transcriptional activity. Phosphorylation at Ser-276 by RPS6KA4 and RPS6KA5 promotes its transactivation and transcriptional activities. Phosphorylation at Ser-75 by herpes simplex virus 1/HHV-1 inhibits NF-kappa-B activation. Post-translationally, reversibly acetylated; the acetylation seems to be mediated by CBP, the deacetylation by HDAC3 and SIRT2. Acetylation at Lys-122 enhances DNA binding and impairs association with NFKBIA. Acetylation at Lys-310 is required for full transcriptional activity in the absence of effects on DNA binding and NFKBIA association. Acetylation at Lys-310 promotes interaction with BRD4. Acetylation can also lower DNA-binding and results in nuclear export. Interaction with BRMS1 promotes deacetylation of Lys-310. Lys-310 is deacetylated by SIRT2. In terms of processing, S-nitrosylation of Cys-38 inactivates the enzyme activity. Sulfhydration at Cys-38 mediates the anti-apoptotic activity by promoting the interaction with RPS3 and activating the transcription factor activity. Post-translationally, sumoylation by PIAS3 negatively regulates DNA-bound activated NF-kappa-B. In terms of processing, proteolytically cleaved within a conserved N-terminus region required for base-specific contact with DNA in a CPEN1-mediated manner, and hence inhibits NF-kappa-B transcriptional activity.

It is found in the nucleus. It localises to the cytoplasm. In terms of biological role, NF-kappa-B is a pleiotropic transcription factor present in almost all cell types and is the endpoint of a series of signal transduction events that are initiated by a vast array of stimuli related to many biological processes such as inflammation, immunity, differentiation, cell growth, tumorigenesis and apoptosis. NF-kappa-B is a homo- or heterodimeric complex formed by the Rel-like domain-containing proteins RELA/p65, RELB, NFKB1/p105, NFKB1/p50, REL and NFKB2/p52. The heterodimeric RELA-NFKB1 complex appears to be most abundant one. The dimers bind at kappa-B sites in the DNA of their target genes and the individual dimers have distinct preferences for different kappa-B sites that they can bind with distinguishable affinity and specificity. Different dimer combinations act as transcriptional activators or repressors, respectively. The NF-kappa-B heterodimeric RELA-NFKB1 and RELA-REL complexes, for instance, function as transcriptional activators. NF-kappa-B is controlled by various mechanisms of post-translational modification and subcellular compartmentalization as well as by interactions with other cofactors or corepressors. NF-kappa-B complexes are held in the cytoplasm in an inactive state complexed with members of the NF-kappa-B inhibitor (I-kappa-B) family. In a conventional activation pathway, I-kappa-B is phosphorylated by I-kappa-B kinases (IKKs) in response to different activators, subsequently degraded thus liberating the active NF-kappa-B complex which translocates to the nucleus. The inhibitory effect of I-kappa-B on NF-kappa-B through retention in the cytoplasm is exerted primarily through the interaction with RELA. RELA shows a weak DNA-binding site which could contribute directly to DNA binding in the NF-kappa-B complex. Besides its activity as a direct transcriptional activator, it is also able to modulate promoters accessibility to transcription factors and thereby indirectly regulate gene expression. Associates with chromatin at the NF-kappa-B promoter region via association with DDX1. Essential for cytokine gene expression in T-cells. The NF-kappa-B homodimeric RELA-RELA complex appears to be involved in invasin-mediated activation of IL-8 expression. Key transcription factor regulating the IFN response during SARS-CoV-2 infection. This is Transcription factor p65 (RELA) from Homo sapiens (Human).